A 158-amino-acid polypeptide reads, in one-letter code: Large ribosomal subunit protein uL16 (158 aa).

This sequence belongs to the universal ribosomal protein uL16 family. In terms of assembly, part of the 50S ribosomal subunit.

In terms of biological role, binds 23S rRNA and is also seen to make contacts with the A and possibly P site tRNAs. This Prochlorococcus marinus (strain MIT 9303) protein is Large ribosomal subunit protein uL16.